A 440-amino-acid chain; its full sequence is tRNA-2-methylthio-N(6)-dimethylallyladenosine synthase (440 aa).

The region spanning 3-119 is the MTTase N-terminal domain; that stretch reads KKFFIKTFGC…LPELINQAQA (117 aa). Positions 12, 48, 82, 158, 162, and 165 each coordinate [4Fe-4S] cluster. Residues 144–374 enclose the Radical SAM core domain; sequence RDNKYCAYVT…LELQKSILSE (231 aa). The region spanning 377–437 is the TRAM domain; it reads KKYEGTVQEV…PFSLEGELLE (61 aa).

The protein belongs to the methylthiotransferase family. MiaB subfamily. Monomer. [4Fe-4S] cluster is required as a cofactor.

It is found in the cytoplasm. The catalysed reaction is N(6)-dimethylallyladenosine(37) in tRNA + (sulfur carrier)-SH + AH2 + 2 S-adenosyl-L-methionine = 2-methylsulfanyl-N(6)-dimethylallyladenosine(37) in tRNA + (sulfur carrier)-H + 5'-deoxyadenosine + L-methionine + A + S-adenosyl-L-homocysteine + 2 H(+). Its function is as follows. Catalyzes the methylthiolation of N6-(dimethylallyl)adenosine (i(6)A), leading to the formation of 2-methylthio-N6-(dimethylallyl)adenosine (ms(2)i(6)A) at position 37 in tRNAs that read codons beginning with uridine. In Aquifex aeolicus (strain VF5), this protein is tRNA-2-methylthio-N(6)-dimethylallyladenosine synthase.